Reading from the N-terminus, the 358-residue chain is MNDDISASFFSHRGDFTLDVAFHTPGQGVTALFGRSGSGKTTLLRFIAGLERAEKGALQIKDEVWQSADLFVPPHRRALGYVFQEPSLFAHLSVMDNLLYGHQRIPQWERRVAPEEVIRWLELEPLIGRNTQSLSGGQRQRVAIGRALLTSPKLLLMDEPLASLDLQSKEEILPYLDELFQQLDIPVFYVSHSPDEVMRLASHLVLLDHGCVRAGGPINELLTRPDLPLAHLEEASAVVHATIQAHDLEYHQTLLSVPGGVLAVHHKQGPIGQQVRLRIHAKDVSLALKPPELSSISNCIPVKVIDINVDREPSQVVVRLALGEETILSRVTRRSIDQLNIERGMSVFAQVKSVALID.

The region spanning 2–234 (NDDISASFFS…PDLPLAHLEE (233 aa)) is the ABC transporter domain. Residue 34-41 (GRSGSGKT) coordinates ATP. Positions 293–358 (LSSISNCIPV…AQVKSVALID (66 aa)) constitute a Mop domain.

This sequence belongs to the ABC transporter superfamily. Molybdate importer (TC 3.A.1.8) family. The complex is composed of two ATP-binding proteins (ModC), two transmembrane proteins (ModB) and a solute-binding protein (ModA).

It localises to the cell inner membrane. It catalyses the reaction molybdate(out) + ATP + H2O = molybdate(in) + ADP + phosphate + H(+). In terms of biological role, part of the ABC transporter complex ModABC involved in molybdenum import. Responsible for energy coupling to the transport system. The sequence is that of Molybdenum import ATP-binding protein ModC from Hahella chejuensis (strain KCTC 2396).